A 206-amino-acid polypeptide reads, in one-letter code: Imidazoleglycerol-phosphate dehydratase (206 aa).

Residues Met-1–Lys-24 form a disordered region.

Belongs to the imidazoleglycerol-phosphate dehydratase family.

The protein resides in the cytoplasm. The catalysed reaction is D-erythro-1-(imidazol-4-yl)glycerol 3-phosphate = 3-(imidazol-4-yl)-2-oxopropyl phosphate + H2O. It functions in the pathway amino-acid biosynthesis; L-histidine biosynthesis; L-histidine from 5-phospho-alpha-D-ribose 1-diphosphate: step 6/9. The polypeptide is Imidazoleglycerol-phosphate dehydratase (Acidothermus cellulolyticus (strain ATCC 43068 / DSM 8971 / 11B)).